A 461-amino-acid polypeptide reads, in one-letter code: Complement C1r subcomponent-like protein (461 aa).

The signal sequence occupies residues 1 to 22 (MCWLLLWGILHTCPTQASVLLA). The 117-residue stretch at 23–139 (QQFPQQLTSP…KGFLALYQAA (117 aa)) folds into the CUB domain. Intrachain disulfides connect cysteine 71–cysteine 89 and cysteine 164–cysteine 197. The Sushi domain occupies 138 to 199 (AAVSQPNGDA…RGEEVPECVP (62 aa)). The Peptidase S1 domain maps to 214-453 (TFGSSRAKPG…YVDWIKGVIE (240 aa)). The Charge relay system role is filled by histidine 252. Asparagine 265 carries N-linked (GlcNAc...) asparagine glycosylation. The active-site Charge relay system is aspartate 308. Asparagine 332 is a glycosylation site (N-linked (GlcNAc...) asparagine). 2 disulfides stabilise this stretch: cysteine 371–cysteine 390 and cysteine 401–cysteine 431. Serine 405 (charge relay system) is an active-site residue.

It belongs to the peptidase S1 family.

Its subcellular location is the secreted. Mediates the proteolytic cleavage of HP/haptoglobin in the endoplasmic reticulum. This Rattus norvegicus (Rat) protein is Complement C1r subcomponent-like protein (C1rl).